The primary structure comprises 801 residues: MLVSYKWLKELVDIDVTPAALAEKMSTTGIEVEGIEVPADGLSKLVVGHVLSCEDVPETHLHLCQVDTGDETPRQIVCGAPNVKAGIKVIVAVPGARIADNYKIKKGKIRGMESLGMICSLQELGLSDSIIPKEFSDGIQILPEEAVPGDAIFKYLDLDDHIIELSITPNRADALSMRGVAHEVAAIYGKSVSFPQKNLQESDKATSEAIEVAIASDNVLTYASRVVENVKVKPSPQWLQNLLMNAGIRPINNVVDVTNYVLLYFGQPMHAFDYDKFEDHKIVARAARQGESLVTLDGEKRDLTTEDLVITVADKPVALAGVMGGQATEIDANSQTVVLEAAVFDGKSIRKTSGRLNLRSESSSRFEKGVNYATVLEALDFAAAMLQELAEGQVLSGHVQAGQLPTEPVEVSTSLDYVNVRLGTELTFADIQRIFDQLGFGLTGDETSFTVAVPRRRWDVSIPADLVEEIARIYGYDKLPTTLPEAGGTAAELTPTQALRRKVRGLAEGLGLTEIISYALTTPEKAVEFAVAPSHLTELMWPMSVERSALRQNMVSGMLDTVAYNVARKQSNLALYEIGKIFEQEANPKEDLPNEVNHFAFAICGLVAQKDFQTQAQAVDFYHAKGNLDTLFANLNLKVQYVPTKDLANMHPGRTALILLDEQVIGFVGQVHPGTAKAYSIPETYVAELDMAALEAALPSDQTFAEITKFPAMTRDVALLLDREVSHQAIVTAIESAGVKRLTSIKLFDVYEGATIQAGKKSMAYSLTFQNPNDNLTDEEVAKYMEKITKALTEQVGAEVR.

The tRNA-binding domain maps to 39 to 153 (ADGLSKLVVG…EEAVPGDAIF (115 aa)). In terms of domain architecture, B5 spans 406 to 481 (TEPVEVSTSL…RIYGYDKLPT (76 aa)). Mg(2+) is bound by residues Asp459, Asp465, Glu468, and Glu469. Residues 708-801 (TKFPAMTRDV…LTEQVGAEVR (94 aa)) form the FDX-ACB domain.

Belongs to the phenylalanyl-tRNA synthetase beta subunit family. Type 1 subfamily. As to quaternary structure, tetramer of two alpha and two beta subunits. Requires Mg(2+) as cofactor.

The protein resides in the cytoplasm. It carries out the reaction tRNA(Phe) + L-phenylalanine + ATP = L-phenylalanyl-tRNA(Phe) + AMP + diphosphate + H(+). This chain is Phenylalanine--tRNA ligase beta subunit, found in Streptococcus pyogenes serotype M1.